The following is a 110-amino-acid chain: NADH-quinone oxidoreductase subunit K (110 aa).

A run of 3 helical transmembrane segments spans residues 13–33 (LNHYLILSSLVFTIGMFGLFM), 41–61 (ILMSIELMLLAVNINFVAFSV), and 73–93 (IIILTVAAAETAIGLAILLIY).

The protein belongs to the complex I subunit 4L family. NDH-1 is composed of 14 different subunits. Subunits NuoA, H, J, K, L, M, N constitute the membrane sector of the complex.

Its subcellular location is the cell inner membrane. It catalyses the reaction a quinone + NADH + 5 H(+)(in) = a quinol + NAD(+) + 4 H(+)(out). In terms of biological role, NDH-1 shuttles electrons from NADH, via FMN and iron-sulfur (Fe-S) centers, to quinones in the respiratory chain. The immediate electron acceptor for the enzyme in this species is believed to be ubiquinone. Couples the redox reaction to proton translocation (for every two electrons transferred, four hydrogen ions are translocated across the cytoplasmic membrane), and thus conserves the redox energy in a proton gradient. This is NADH-quinone oxidoreductase subunit K from Rickettsia prowazekii (strain Madrid E).